We begin with the raw amino-acid sequence, 534 residues long: Cytokinin dehydrogenase 1 (534 aa).

The N-terminal stretch at 1–18 (MAVVYYLLLAGLIACSHA) is a signal peptide. N-linked (GlcNAc...) asparagine glycosylation is found at Asn52, Asn63, and Asn89. Positions 65-245 (TSALPAAVLY…TRARIAVEPA (181 aa)) constitute an FAD-binding PCMH-type domain. Phe100, Gly102, Arg103, and Gly104 together coordinate FAD. His105 is subject to Pros-8alpha-FAD histidine. FAD-binding residues include Ser106 and Gln110. Asn134 carries an N-linked (GlcNAc...) asparagine glycan. The FAD site is built by Asp169, Thr174, Ser180, Ile184, and Ile235. Asp169 contributes to the N(6)-dimethylallyladenine binding site. Trans-zeatin is bound at residue Asp169. Residues Asn294, Asn323, and Asn338 are each glycosylated (N-linked (GlcNAc...) asparagine). Glu381 lines the N(6)-dimethylallyladenine pocket. Trans-zeatin is bound at residue Glu381. Asn434 carries an N-linked (GlcNAc...) asparagine glycan. Ser456 lines the trans-zeatin pocket. Tyr491, Ser527, and Gln530 together coordinate FAD.

It belongs to the oxygen-dependent FAD-linked oxidoreductase family. As to quaternary structure, monomer. Requires FAD as cofactor. Glycosylated; with approximately 10 hexose residues per site. In terms of tissue distribution, expressed in immature kernels and unpollinated cobs. Weakly expressed in kernels harvested two weeks after anthesis.

The protein resides in the secreted. Its subcellular location is the extracellular space. The enzyme catalyses N(6)-dimethylallyladenine + A + H2O = 3-methyl-2-butenal + adenine + AH2. Competitive inhibition by phenylureas. Its function is as follows. Catalyzes the oxidation of cytokinins, a family of N(6)-substituted adenine derivatives that are plant hormones, where the substituent is an isopentenyl group. Cleaves trans-zeatin, N(6)-dimethylallyladenine (isopentenyladenine), isopentenyladenosine, zeatin riboside and cis-zeatin, but not dihydrozeatin, kinetin and benzylaminopurine. In Zea mays (Maize), this protein is Cytokinin dehydrogenase 1 (CKX1).